The following is a 207-amino-acid chain: uncharacterized protein (207 aa).

Residues Ser-119 and His-160 each act as charge relay system in the active site.

Belongs to the peptidase S51 family.

This is an uncharacterized protein from Pasteurella multocida (strain Pm70).